The chain runs to 181 residues: Protein GrpE (181 aa).

The span at Met1–Ser12 shows a compositional bias: polar residues. Positions Met1–Ala33 are disordered. Residues Gln21–Ala33 show a composition bias toward low complexity.

Belongs to the GrpE family. In terms of assembly, homodimer.

It is found in the cytoplasm. Participates actively in the response to hyperosmotic and heat shock by preventing the aggregation of stress-denatured proteins, in association with DnaK and GrpE. It is the nucleotide exchange factor for DnaK and may function as a thermosensor. Unfolded proteins bind initially to DnaJ; upon interaction with the DnaJ-bound protein, DnaK hydrolyzes its bound ATP, resulting in the formation of a stable complex. GrpE releases ADP from DnaK; ATP binding to DnaK triggers the release of the substrate protein, thus completing the reaction cycle. Several rounds of ATP-dependent interactions between DnaJ, DnaK and GrpE are required for fully efficient folding. This chain is Protein GrpE, found in Burkholderia cenocepacia (strain HI2424).